The following is a 196-amino-acid chain: Large ribosomal subunit protein bL9 (196 aa).

This sequence belongs to the bacterial ribosomal protein bL9 family.

Functionally, binds to the 23S rRNA. This Bradyrhizobium sp. (strain ORS 278) protein is Large ribosomal subunit protein bL9.